The following is an 880-amino-acid chain: Lon protease (880 aa).

The segment at 1–37 (MADYNDKNYLLHMSGPDSDTGPGIENEDPRAVENPGH) is disordered. Over residues 27–37 (EDPRAVENPGH) the composition is skewed to basic and acidic residues. Residues 57 to 251 (LPILPVRDVV…LVNTQLQREV (195 aa)) enclose the Lon N-terminal domain. 404 to 411 (GPPGVGKT) is a binding site for ATP. The Lon proteolytic domain occupies 640–821 (KLMPGMALGL…DELLPLVFEG (182 aa)). Residues Ser727 and Lys770 contribute to the active site. The span at 826 to 836 (GGVSGAGQAGD) shows a compositional bias: gly residues. The segment at 826 to 880 (GGVSGAGQAGDKGGKSKAAAGKKDVVAARPAKPAAPARRRKDKTEDELPTAEAGA) is disordered. Residues 852–861 (AARPAKPAAP) are compositionally biased toward low complexity.

Belongs to the peptidase S16 family. As to quaternary structure, homohexamer. Organized in a ring with a central cavity.

It localises to the cytoplasm. The catalysed reaction is Hydrolysis of proteins in presence of ATP.. In terms of biological role, ATP-dependent serine protease that mediates the selective degradation of mutant and abnormal proteins as well as certain short-lived regulatory proteins. Required for cellular homeostasis and for survival from DNA damage and developmental changes induced by stress. Degrades polypeptides processively to yield small peptide fragments that are 5 to 10 amino acids long. Binds to DNA in a double-stranded, site-specific manner. The chain is Lon protease from Desulfovibrio desulfuricans (strain ATCC 27774 / DSM 6949 / MB).